The sequence spans 267 residues: Tryptophan synthase alpha chain (267 aa).

Residues glutamate 47 and aspartate 58 each act as proton acceptor in the active site.

It belongs to the TrpA family. As to quaternary structure, tetramer of two alpha and two beta chains.

It catalyses the reaction (1S,2R)-1-C-(indol-3-yl)glycerol 3-phosphate + L-serine = D-glyceraldehyde 3-phosphate + L-tryptophan + H2O. Its pathway is amino-acid biosynthesis; L-tryptophan biosynthesis; L-tryptophan from chorismate: step 5/5. Its function is as follows. The alpha subunit is responsible for the aldol cleavage of indoleglycerol phosphate to indole and glyceraldehyde 3-phosphate. This is Tryptophan synthase alpha chain from Chlorobium limicola (strain DSM 245 / NBRC 103803 / 6330).